The primary structure comprises 213 residues: Putative 3-methyladenine DNA glycosylase (213 aa).

The segment at 165 to 187 (GTPVPPDQVRNGPRTGVSGDGGV) is disordered.

It belongs to the DNA glycosylase MPG family.

This chain is Putative 3-methyladenine DNA glycosylase, found in Streptomyces avermitilis (strain ATCC 31267 / DSM 46492 / JCM 5070 / NBRC 14893 / NCIMB 12804 / NRRL 8165 / MA-4680).